The chain runs to 92 residues: Kappa-scoloptoxin(15)-Ssd2a (92 aa).

The N-terminal stretch at 1–20 (MKMVYLGLFLIITSCVISSG) is a signal peptide.

Post-translationally, contains 3 disulfide bonds. As to expression, expressed by the venom gland.

It localises to the secreted. Inhibits voltage-gated potassium channels (Kv) (IC(50)=about 10 nM), when tested on DRG neurons. This Scolopendra dehaani (Thai centipede) protein is Kappa-scoloptoxin(15)-Ssd2a.